The following is a 136-amino-acid chain: NHL-repeat-containing protein 4 (136 aa).

2 NHL repeats span residues 48–91 (QPLG…FPRV) and 93–132 (PPIC…YQYL).

This chain is NHL-repeat-containing protein 4 (Nhlrc4), found in Mus musculus (Mouse).